The sequence spans 509 residues: Bifunctional pantoate ligase/cytidylate kinase (509 aa).

A pantoate--beta-alanine ligase region spans residues 1–275 (MKKLIIRKTE…CGETRLIDHV (275 aa)). ATP is bound at residue 29 to 36 (MGNLHDGH). His36 acts as the Proton donor in catalysis. Position 61 (Gln61) interacts with (R)-pantoate. Gln61 contacts beta-alanine. ATP is bound at residue 149-152 (GEKD). Residue Gln155 coordinates (R)-pantoate. Residue 186-189 (LSSR) participates in ATP binding. Positions 276-509 (FLMKRRPIIA…DKIPKESEIK (234 aa)) are cytidylate kinase.

The protein in the N-terminal section; belongs to the pantothenate synthetase family. It in the C-terminal section; belongs to the cytidylate kinase family. Type 1 subfamily.

Its subcellular location is the cytoplasm. The enzyme catalyses (R)-pantoate + beta-alanine + ATP = (R)-pantothenate + AMP + diphosphate + H(+). It catalyses the reaction CMP + ATP = CDP + ADP. The catalysed reaction is dCMP + ATP = dCDP + ADP. The protein operates within cofactor biosynthesis; (R)-pantothenate biosynthesis; (R)-pantothenate from (R)-pantoate and beta-alanine: step 1/1. Its function is as follows. Catalyzes the condensation of pantoate with beta-alanine in an ATP-dependent reaction via a pantoyl-adenylate intermediate. Catalyzes the transfer of a phosphate group from ATP to either CMP or dCMP to form CDP or dCDP and ADP, respectively. This chain is Bifunctional pantoate ligase/cytidylate kinase, found in Prochlorococcus marinus (strain AS9601).